Reading from the N-terminus, the 329-residue chain is Glycerol-3-phosphate dehydrogenase [NAD(P)+] (329 aa).

Residues W11, R30, and K103 each coordinate NADPH. The sn-glycerol 3-phosphate site is built by K103, G132, and S134. A136 lines the NADPH pocket. Sn-glycerol 3-phosphate is bound by residues K187, D240, S250, R251, and N252. K187 acts as the Proton acceptor in catalysis. Residue R251 coordinates NADPH. NADPH contacts are provided by V275 and E277.

Belongs to the NAD-dependent glycerol-3-phosphate dehydrogenase family.

The protein localises to the cytoplasm. The catalysed reaction is sn-glycerol 3-phosphate + NAD(+) = dihydroxyacetone phosphate + NADH + H(+). It carries out the reaction sn-glycerol 3-phosphate + NADP(+) = dihydroxyacetone phosphate + NADPH + H(+). It participates in membrane lipid metabolism; glycerophospholipid metabolism. Its function is as follows. Catalyzes the reduction of the glycolytic intermediate dihydroxyacetone phosphate (DHAP) to sn-glycerol 3-phosphate (G3P), the key precursor for phospholipid synthesis. This Nitrosomonas europaea (strain ATCC 19718 / CIP 103999 / KCTC 2705 / NBRC 14298) protein is Glycerol-3-phosphate dehydrogenase [NAD(P)+].